Here is a 301-residue protein sequence, read N- to C-terminus: Putative phosphoenolpyruvate synthase regulatory protein (301 aa).

Residues 1–24 are compositionally biased toward low complexity; sequence MSEPVAPDGAQPAPAGATPQPLQP. Residues 1 to 27 are disordered; that stretch reads MSEPVAPDGAQPAPAGATPQPLQPIAG. 181-188 provides a ligand contact to ADP; it reads GVSRSGKT.

Belongs to the pyruvate, phosphate/water dikinase regulatory protein family. PSRP subfamily.

The enzyme catalyses [pyruvate, water dikinase] + ADP = [pyruvate, water dikinase]-phosphate + AMP + H(+). It catalyses the reaction [pyruvate, water dikinase]-phosphate + phosphate + H(+) = [pyruvate, water dikinase] + diphosphate. In terms of biological role, bifunctional serine/threonine kinase and phosphorylase involved in the regulation of the phosphoenolpyruvate synthase (PEPS) by catalyzing its phosphorylation/dephosphorylation. This is Putative phosphoenolpyruvate synthase regulatory protein from Cupriavidus pinatubonensis (strain JMP 134 / LMG 1197) (Cupriavidus necator (strain JMP 134)).